The primary structure comprises 360 residues: Membrane-bound lytic murein transglycosylase C (360 aa).

An N-terminal signal peptide occupies residues 1–16 (MKKLLALAVIAPLLIS). A lipid anchor (N-palmitoyl cysteine) is attached at Cys17. The S-diacylglycerol cysteine moiety is linked to residue Cys17.

It belongs to the transglycosylase Slt family.

The protein resides in the cell outer membrane. The enzyme catalyses Exolytic cleavage of the (1-&gt;4)-beta-glycosidic linkage between N-acetylmuramic acid (MurNAc) and N-acetylglucosamine (GlcNAc) residues in peptidoglycan, from either the reducing or the non-reducing ends of the peptidoglycan chains, with concomitant formation of a 1,6-anhydrobond in the MurNAc residue.. Murein-degrading enzyme. May play a role in recycling of muropeptides during cell elongation and/or cell division. The chain is Membrane-bound lytic murein transglycosylase C from Salmonella typhi.